We begin with the raw amino-acid sequence, 1202 residues long: DNA-directed RNA polymerase subunit beta (1202 aa).

Belongs to the RNA polymerase beta chain family. The RNAP catalytic core consists of 2 alpha, 1 beta, 1 beta' and 1 omega subunit. When a sigma factor is associated with the core the holoenzyme is formed, which can initiate transcription.

The enzyme catalyses RNA(n) + a ribonucleoside 5'-triphosphate = RNA(n+1) + diphosphate. Its function is as follows. DNA-dependent RNA polymerase catalyzes the transcription of DNA into RNA using the four ribonucleoside triphosphates as substrates. The chain is DNA-directed RNA polymerase subunit beta from Mycoplasmopsis synoviae (strain 53) (Mycoplasma synoviae).